A 136-amino-acid polypeptide reads, in one-letter code: Putative pre-16S rRNA nuclease (136 aa).

It belongs to the YqgF nuclease family.

The protein resides in the cytoplasm. Its function is as follows. Could be a nuclease involved in processing of the 5'-end of pre-16S rRNA. The chain is Putative pre-16S rRNA nuclease from Francisella philomiragia subsp. philomiragia (strain ATCC 25017 / CCUG 19701 / FSC 153 / O#319-036).